Here is a 270-residue protein sequence, read N- to C-terminus: Interleukin-1 alpha (270 aa).

A propeptide spanning residues 1–114 (MAKVPDLFED…HDLEETIQPR (114 aa)) is cleaved from the precursor. N-linked (GlcNAc...) asparagine glycosylation is present at Asn64. Lys85 is subject to N6-acetyllysine. A nuclear localization signal (NLS) region spans residues 85 to 89 (KKRRL). A Phosphoserine modification is found at Ser90. N-linked (GlcNAc...) asparagine glycosylation is found at Asn139 and Asn143.

The protein belongs to the IL-1 family. Monomer. Interacts with TMED10; the interaction mediates the translocation from the cytoplasm into the ERGIC (endoplasmic reticulum-Golgi intermediate compartment) and thereby secretion. Interacts with IL1R1. Interacts with S100A13; this interaction is the first step in the export of IL1A, followed by direct translocation of this complex across the plasma membrane. Acetylated within its nuclear localization sequence, which impacts subcellular localization. Post-translationally, proteolytic processed by CAPN1 in a calcium-dependent manner. Cleavage from 31 kDa precursor to 18 kDa biologically active molecules. In terms of processing, phosphorylated. Phosphorylation greatly enhances susceptibility to digestion and promotes the conversion of pre-IL1A alpha to the biologically active IL1A.

It localises to the nucleus. Its subcellular location is the cytoplasm. It is found in the secreted. Cytokine constitutively present intracellularly in nearly all resting non-hematopoietic cells that plays an important role in inflammation and bridges the innate and adaptive immune systems. After binding to its receptor IL1R1 together with its accessory protein IL1RAP, forms the high affinity interleukin-1 receptor complex. Signaling involves the recruitment of adapter molecules such as MYD88, IRAK1 or IRAK4. In turn, mediates the activation of NF-kappa-B and the three MAPK pathways p38, p42/p44 and JNK pathways. Within the cell, acts as an alarmin and cell death results in its liberation in the extracellular space after disruption of the cell membrane to induce inflammation and alert the host to injury or damage. In addition to its role as a danger signal, which occurs when the cytokine is passively released by cell necrosis, directly senses DNA damage and acts as a signal for genotoxic stress without loss of cell integrity. This is Interleukin-1 alpha from Mus musculus (Mouse).